The following is a 159-amino-acid chain: Phosphopantetheine adenylyltransferase (159 aa).

Position 16 (histidine 16) interacts with ATP. Positions 40, 72, and 86 each coordinate substrate. ATP contacts are provided by residues 87–89 (GLR), glutamate 97, and 122–128 (YQYLSAS).

Belongs to the bacterial CoaD family. In terms of assembly, homohexamer. Mg(2+) serves as cofactor.

It localises to the cytoplasm. The enzyme catalyses (R)-4'-phosphopantetheine + ATP + H(+) = 3'-dephospho-CoA + diphosphate. It functions in the pathway cofactor biosynthesis; coenzyme A biosynthesis; CoA from (R)-pantothenate: step 4/5. In terms of biological role, reversibly transfers an adenylyl group from ATP to 4'-phosphopantetheine, yielding dephospho-CoA (dPCoA) and pyrophosphate. This chain is Phosphopantetheine adenylyltransferase, found in Dehalococcoides mccartyi (strain ATCC BAA-2100 / JCM 16839 / KCTC 5957 / BAV1).